Consider the following 276-residue polypeptide: Diaminopimelate epimerase (276 aa).

3 residues coordinate substrate: asparagine 13, glutamine 46, and asparagine 66. Cysteine 75 (proton donor) is an active-site residue. Residues 76–77 (GN), asparagine 159, asparagine 192, and 210–211 (ER) each bind substrate. Cysteine 219 serves as the catalytic Proton acceptor. Position 220 to 221 (220 to 221 (GT)) interacts with substrate.

This sequence belongs to the diaminopimelate epimerase family. In terms of assembly, homodimer.

It localises to the cytoplasm. The catalysed reaction is (2S,6S)-2,6-diaminopimelate = meso-2,6-diaminopimelate. It participates in amino-acid biosynthesis; L-lysine biosynthesis via DAP pathway; DL-2,6-diaminopimelate from LL-2,6-diaminopimelate: step 1/1. Functionally, catalyzes the stereoinversion of LL-2,6-diaminopimelate (L,L-DAP) to meso-diaminopimelate (meso-DAP), a precursor of L-lysine and an essential component of the bacterial peptidoglycan. This is Diaminopimelate epimerase from Pseudomonas aeruginosa (strain LESB58).